The following is a 35-amino-acid chain: Photosystem II reaction center protein Psb30 (35 aa).

A helical transmembrane segment spans residues 6 to 26; it reads VIVQLVFLALIITTGPVIIVY.

It belongs to the Psb30/Ycf12 family. As to quaternary structure, PSII is composed of 1 copy each of membrane proteins PsbA, PsbB, PsbC, PsbD, PsbE, PsbF, PsbH, PsbI, PsbJ, PsbK, PsbL, PsbM, PsbT, PsbY, PsbZ, Psb30/Ycf12, peripheral proteins of the oxygen-evolving complex and a large number of cofactors. It forms dimeric complexes.

The protein localises to the plastid. The protein resides in the chloroplast thylakoid membrane. A core subunit of photosystem II (PSII), probably helps stabilize the reaction center. The chain is Photosystem II reaction center protein Psb30 from Cyanidium caldarium (Red alga).